We begin with the raw amino-acid sequence, 314 residues long: Serine/threonine-protein phosphatase CPPED1 (314 aa).

Residue S2 is modified to Phosphoserine. The catalytic stretch occupies residues 47 to 250; the sequence is KAWSTGDCDN…KVVFSGHYHR (204 aa). A divalent metal cation-binding residues include D53, D90, N127, and H247. S294 carries the post-translational modification Phosphoserine.

It belongs to the metallophosphoesterase superfamily. CPPED1 family. Requires a divalent metal cation as cofactor.

Its subcellular location is the cytoplasm. It carries out the reaction O-phospho-L-seryl-[protein] + H2O = L-seryl-[protein] + phosphate. The catalysed reaction is O-phospho-L-threonyl-[protein] + H2O = L-threonyl-[protein] + phosphate. In terms of biological role, protein phosphatase that dephosphorylates AKT family kinase specifically at 'Ser-473', blocking cell cycle progression and promoting cell apoptosis. May play an inhibitory role in glucose uptake by adipocytes. The chain is Serine/threonine-protein phosphatase CPPED1 (CPPED1) from Pongo abelii (Sumatran orangutan).